Here is a 238-residue protein sequence, read N- to C-terminus: dITP/XTP pyrophosphatase (238 aa).

7–12 (SANQHK) is a substrate binding site. The active-site Proton acceptor is Asp89. Position 89 (Asp89) interacts with Mg(2+). Residues Ser90, 191-194 (FGYD), Lys217, and 222-223 (HR) each bind substrate.

This sequence belongs to the HAM1 NTPase family. In terms of assembly, homodimer. Mg(2+) is required as a cofactor.

It catalyses the reaction XTP + H2O = XMP + diphosphate + H(+). It carries out the reaction dITP + H2O = dIMP + diphosphate + H(+). The catalysed reaction is ITP + H2O = IMP + diphosphate + H(+). Functionally, pyrophosphatase that catalyzes the hydrolysis of nucleoside triphosphates to their monophosphate derivatives, with a high preference for the non-canonical purine nucleotides XTP (xanthosine triphosphate), dITP (deoxyinosine triphosphate) and ITP. Seems to function as a house-cleaning enzyme that removes non-canonical purine nucleotides from the nucleotide pool, thus preventing their incorporation into DNA/RNA and avoiding chromosomal lesions. This is dITP/XTP pyrophosphatase from Helicobacter hepaticus (strain ATCC 51449 / 3B1).